The sequence spans 200 residues: 7-methyl-GTP pyrophosphatase (200 aa).

The Proton acceptor role is filled by Asp-75.

It belongs to the Maf family. YceF subfamily. The cofactor is a divalent metal cation.

The protein resides in the cytoplasm. The enzyme catalyses N(7)-methyl-GTP + H2O = N(7)-methyl-GMP + diphosphate + H(+). Functionally, nucleoside triphosphate pyrophosphatase that hydrolyzes 7-methyl-GTP (m(7)GTP). May have a dual role in cell division arrest and in preventing the incorporation of modified nucleotides into cellular nucleic acids. The protein is 7-methyl-GTP pyrophosphatase of Hydrogenovibrio crunogenus (strain DSM 25203 / XCL-2) (Thiomicrospira crunogena).